We begin with the raw amino-acid sequence, 534 residues long: Protein TIC 62, chloroplastic (534 aa).

The N-terminal 64 residues, 1–64 (MPMEVFSLTS…SSSSSSSSIR (64 aa)), are a transit peptide targeting the chloroplast. The disordered stretch occupies residues 50–83 (NNRIRSSSSSSSSIRAQASGSTKSSTAEGIPEKT). The span at 63-76 (IRAQASGSTKSSTA) shows a compositional bias: polar residues. 91 to 120 (VFVAGATGKVGSRTVRELIKLGFKVRAGVR) contacts NADP(+). Residues 334–534 (PSQRPYIPSP…ASPSPSFRKS (201 aa)) are disordered. The segment covering 350–360 (DTATVSNTGPS) has biased composition (polar residues). Residues 387-408 (PLSPYTAYDDLKPPSSPSPTKP) form repeat 1. Positions 387-532 (PLSPYTAYDD…PPASPSPSFR (146 aa)) are 3 X 22 AA approximate repeats. Low complexity predominate over residues 421 to 432 (PTPISSDTPSSI). Repeat 2 spans residues 450–471 (SLSPYAAYPDLKPPSSPSPSVP). Residues 460–469 (LKPPSSPSPS) show a composition bias toward pro residues. Residues 495–509 (DTPKNEEQHLHEPKS) show a composition bias toward basic and acidic residues. The stretch at 511-532 (PLSPYAMYEDLKPPASPSPSFR) is repeat 3.

Part of the Tic complex. Interacts with TIC40, TIC110 and TIC55. Interacts (via C-terminus) with PETH/FNR.

It is found in the plastid. It localises to the chloroplast inner membrane. The protein localises to the chloroplast stroma. Involved in protein precursor import into chloroplasts. Part of the redox regulon consisting of TIC32, TIC 55 and TIC62. Has a NADPH-dependent dehydrogenase activity, but only after preincubation with lipids. The chain is Protein TIC 62, chloroplastic (TIC62) from Pisum sativum (Garden pea).